The sequence spans 310 residues: Porphobilinogen deaminase (310 aa).

Cysteine 241 carries the post-translational modification S-(dipyrrolylmethanemethyl)cysteine.

It belongs to the HMBS family. Monomer. It depends on dipyrromethane as a cofactor.

The catalysed reaction is 4 porphobilinogen + H2O = hydroxymethylbilane + 4 NH4(+). Its pathway is porphyrin-containing compound metabolism; protoporphyrin-IX biosynthesis; coproporphyrinogen-III from 5-aminolevulinate: step 2/4. Functionally, tetrapolymerization of the monopyrrole PBG into the hydroxymethylbilane pre-uroporphyrinogen in several discrete steps. The chain is Porphobilinogen deaminase from Lysinibacillus sphaericus (strain C3-41).